We begin with the raw amino-acid sequence, 1023 residues long: Presequence protease, mitochondrial (1023 aa).

The N-terminal 62 residues, 1 to 62 (MFRQSKTIIT…PDLFLTAVKL (62 aa)), are a transit peptide targeting the mitochondrion. Histidine 99 serves as a coordination point for Zn(2+). The active-site Proton acceptor is glutamate 102. Zn(2+) is bound by residues histidine 103 and glutamate 200. A disulfide bridge connects residues cysteine 114 and cysteine 551.

The protein belongs to the peptidase M16 family. PreP subfamily. As to quaternary structure, monomer and homodimer; homodimerization is induced by binding of the substrate. It depends on Zn(2+) as a cofactor. Post-translationally, a disulfide bond locks the enzyme in the closed conformation preventing substrate entry into the catalytic chamber.

The protein resides in the mitochondrion matrix. Mainly exists in a closed and catalytically competent conformation but a closed-to-open switch allows substrate entry into the catalytic chamber. Substrate binding induces closure and dimerization. A disulfide bond may lock the enzyme in a closed conformation preventing substrate entry into the catalytic chamber, participating in redox regulation of the enzyme. Inhibited by metal-chelating agents. Inhibited by nickel and zinc excess, and slightly activated by manganese. Functionally, metalloendopeptidase of the mitochondrial matrix that functions in peptide cleavage and degradation rather than in protein processing. Has an ATP-independent activity. Specifically cleaves peptides in the range of 5 to 65 residues. Shows a preference for cleavage after small polar residues and before basic residues, but without any positional preference. Degrades the transit peptides of mitochondrial proteins after their cleavage. Also degrades other unstructured peptides. This is Presequence protease, mitochondrial (pitrm1) from Danio rerio (Zebrafish).